The sequence spans 528 residues: GMP synthase [glutamine-hydrolyzing] (528 aa).

The Glutamine amidotransferase type-1 domain maps to 13 to 203; that stretch reads TVLVVDFGAQ…LYEAAGCRPT (191 aa). Cys90 acts as the Nucleophile in catalysis. Catalysis depends on residues His177 and Glu179. A GMPS ATP-PPase domain is found at 204-402; the sequence is WTMVNIVEDQ…LGLPAEMVWR (199 aa). 231 to 237 serves as a coordination point for ATP; sequence SGGVDSA.

As to quaternary structure, homodimer.

The enzyme catalyses XMP + L-glutamine + ATP + H2O = GMP + L-glutamate + AMP + diphosphate + 2 H(+). It participates in purine metabolism; GMP biosynthesis; GMP from XMP (L-Gln route): step 1/1. Catalyzes the synthesis of GMP from XMP. In Thermobifida fusca (strain YX), this protein is GMP synthase [glutamine-hydrolyzing].